Consider the following 121-residue polypeptide: Phosphoribosyl-ATP pyrophosphatase (121 aa).

It belongs to the PRA-PH family.

It localises to the cytoplasm. It carries out the reaction 1-(5-phospho-beta-D-ribosyl)-ATP + H2O = 1-(5-phospho-beta-D-ribosyl)-5'-AMP + diphosphate + H(+). It functions in the pathway amino-acid biosynthesis; L-histidine biosynthesis; L-histidine from 5-phospho-alpha-D-ribose 1-diphosphate: step 2/9. The polypeptide is Phosphoribosyl-ATP pyrophosphatase (Nitrosospira multiformis (strain ATCC 25196 / NCIMB 11849 / C 71)).